Here is a 547-residue protein sequence, read N- to C-terminus: Chaperonin GroEL (547 aa).

Residues 30 to 33 (TLGP), Lys51, 87 to 91 (DGTTT), Gly415, 479 to 481 (NAA), and Asp495 contribute to the ATP site.

It belongs to the chaperonin (HSP60) family. Forms a cylinder of 14 subunits composed of two heptameric rings stacked back-to-back. Interacts with the co-chaperonin GroES.

The protein resides in the cytoplasm. The enzyme catalyses ATP + H2O + a folded polypeptide = ADP + phosphate + an unfolded polypeptide.. Functionally, together with its co-chaperonin GroES, plays an essential role in assisting protein folding. The GroEL-GroES system forms a nano-cage that allows encapsulation of the non-native substrate proteins and provides a physical environment optimized to promote and accelerate protein folding. This Bordetella pertussis (strain Tohama I / ATCC BAA-589 / NCTC 13251) protein is Chaperonin GroEL.